A 211-amino-acid chain; its full sequence is NADH-quinone oxidoreductase subunit I (211 aa).

Residues 1–27 (MANTDRPALPHKRAVPPSRADSGPRRR) are disordered. 4Fe-4S ferredoxin-type domains are found at residues 71-101 (LNRY…VEGA) and 117-146 (RVYQ…MTYD). [4Fe-4S] cluster is bound by residues cysteine 81, cysteine 84, cysteine 87, cysteine 91, cysteine 126, cysteine 129, cysteine 132, and cysteine 136.

The protein belongs to the complex I 23 kDa subunit family. As to quaternary structure, NDH-1 is composed of 14 different subunits. Subunits NuoA, H, J, K, L, M, N constitute the membrane sector of the complex. It depends on [4Fe-4S] cluster as a cofactor.

Its subcellular location is the cell membrane. The catalysed reaction is a quinone + NADH + 5 H(+)(in) = a quinol + NAD(+) + 4 H(+)(out). In terms of biological role, NDH-1 shuttles electrons from NADH, via FMN and iron-sulfur (Fe-S) centers, to quinones in the respiratory chain. The immediate electron acceptor for the enzyme in this species is believed to be menaquinone. Couples the redox reaction to proton translocation (for every two electrons transferred, four hydrogen ions are translocated across the cytoplasmic membrane), and thus conserves the redox energy in a proton gradient. The polypeptide is NADH-quinone oxidoreductase subunit I (Mycobacterium tuberculosis (strain ATCC 25177 / H37Ra)).